A 251-amino-acid polypeptide reads, in one-letter code: Ubiquinone/menaquinone biosynthesis C-methyltransferase UbiE (251 aa).

S-adenosyl-L-methionine is bound by residues threonine 74, aspartate 95, and 123–124 (NA).

It belongs to the class I-like SAM-binding methyltransferase superfamily. MenG/UbiE family.

The enzyme catalyses a 2-demethylmenaquinol + S-adenosyl-L-methionine = a menaquinol + S-adenosyl-L-homocysteine + H(+). It carries out the reaction a 2-methoxy-6-(all-trans-polyprenyl)benzene-1,4-diol + S-adenosyl-L-methionine = a 5-methoxy-2-methyl-3-(all-trans-polyprenyl)benzene-1,4-diol + S-adenosyl-L-homocysteine + H(+). The protein operates within quinol/quinone metabolism; menaquinone biosynthesis; menaquinol from 1,4-dihydroxy-2-naphthoate: step 2/2. Its pathway is cofactor biosynthesis; ubiquinone biosynthesis. Methyltransferase required for the conversion of demethylmenaquinol (DMKH2) to menaquinol (MKH2) and the conversion of 2-polyprenyl-6-methoxy-1,4-benzoquinol (DDMQH2) to 2-polyprenyl-3-methyl-6-methoxy-1,4-benzoquinol (DMQH2). The chain is Ubiquinone/menaquinone biosynthesis C-methyltransferase UbiE from Shewanella piezotolerans (strain WP3 / JCM 13877).